The chain runs to 346 residues: MIKVGVVGATGYAGAELVRLLSRHPKVELTMLTSQTYAGKPMWEVFPHLYGIVDNTLEELNIPKLVANCDVIFTALPHGHAMPIAQEVMKKSKRLIDLGADFRLKDVNIYQAWYKTEHTAQLLLNNAVYGLPELYREIIKQSVIVANPGCYPTSVILGLAPLLTNEMVDTKTLIIDAKSGVSGAGRGLSLKTHFSETTNNFQAYGVATHRHTPEIEQELALLAGNPVTVSFTPHLTPMIRGILSTIYASLINNVTTEELTAIYRQFYQGERFVRVLPAGMYPTTKGVAGSNHCDISVTVDVRTKRVIVLSAIDNLIKGAAGQAVQNLNVMLGLPEDTALDFAGIYP.

Residue Cys-150 is part of the active site.

Belongs to the NAGSA dehydrogenase family. Type 1 subfamily.

Its subcellular location is the cytoplasm. It carries out the reaction N-acetyl-L-glutamate 5-semialdehyde + phosphate + NADP(+) = N-acetyl-L-glutamyl 5-phosphate + NADPH + H(+). Its pathway is amino-acid biosynthesis; L-arginine biosynthesis; N(2)-acetyl-L-ornithine from L-glutamate: step 3/4. Functionally, catalyzes the NADPH-dependent reduction of N-acetyl-5-glutamyl phosphate to yield N-acetyl-L-glutamate 5-semialdehyde. The protein is N-acetyl-gamma-glutamyl-phosphate reductase of Desulforamulus reducens (strain ATCC BAA-1160 / DSM 100696 / MI-1) (Desulfotomaculum reducens).